The sequence spans 348 residues: Dihydroorotase (348 aa).

Positions 14 and 16 each coordinate Zn(2+). Residues His16 to Arg18 and Asn42 contribute to the substrate site. Lys100, His137, and His175 together coordinate Zn(2+). Lys100 is subject to N6-carboxylysine. His137 serves as a coordination point for substrate. Leu220 serves as a coordination point for substrate. A Zn(2+)-binding site is contributed by Asp248. Asp248 is a catalytic residue. Substrate contacts are provided by His252 and Ala264.

It belongs to the metallo-dependent hydrolases superfamily. DHOase family. Class II DHOase subfamily. In terms of assembly, homodimer. Zn(2+) serves as cofactor.

It catalyses the reaction (S)-dihydroorotate + H2O = N-carbamoyl-L-aspartate + H(+). It functions in the pathway pyrimidine metabolism; UMP biosynthesis via de novo pathway; (S)-dihydroorotate from bicarbonate: step 3/3. In terms of biological role, catalyzes the reversible cyclization of carbamoyl aspartate to dihydroorotate. The protein is Dihydroorotase of Pseudomonas fluorescens (strain SBW25).